We begin with the raw amino-acid sequence, 414 residues long: MQAEIISVGTEIILGQITNTNARYLADQLRQLAIEAPWQTNVDDDPARIKQALATAKERANLIFICGGLGPTEDDRTMAAVGDYLGRQLRLDEDYWQQIKAQLEARSISATVSPENIRQAYYLAGGTPLSNPTGLALGVYLKDGAHTYVVLPGPPHEFKPMVDQSLLPHLKADFGKGYQTYSALLHFVGRPESLLMQELASLGLDERLVVTSYVQPDEIQVRVTLHDVAKEEATSLLEQAIAKIARQEADYYIGRGAGVSMASQLVALLKEKGLKITGAESLTGGLFQATLCSVAGASEVFDGGFVTYAASAKEQLLGVPVETVRQYGVVSKQTAEAMASGCQQKMGVDVGLSFTGVAGPDDLEGHPAGTVWLGLAIKGRPVESHLLRLPGQTRQFVRQQSVQEGMRLAYNALR.

Belongs to the CinA family.

The protein is Putative competence-damage inducible protein of Limosilactobacillus fermentum (strain NBRC 3956 / LMG 18251) (Lactobacillus fermentum).